A 682-amino-acid polypeptide reads, in one-letter code: Potassium-transporting ATPase ATP-binding subunit (682 aa).

Helical transmembrane passes span 34–54 (PVMF…IAMA), 62–82 (ALFS…ANFA), 219–239 (IALT…TATL), and 254–274 (VLVA…LSAI). The 4-aspartylphosphate intermediate role is filled by aspartate 307. Residues aspartate 344, glutamate 348, 377–384 (FTAQSRMS), and lysine 395 contribute to the ATP site. 2 residues coordinate Mg(2+): aspartate 518 and aspartate 522. 3 helical membrane-spanning segments follow: residues 588-608 (FAII…LNIM), 616-636 (AILS…PLAL), and 656-676 (IYGL…DLLL).

This sequence belongs to the cation transport ATPase (P-type) (TC 3.A.3) family. Type IA subfamily. As to quaternary structure, the system is composed of three essential subunits: KdpA, KdpB and KdpC.

The protein resides in the cell inner membrane. It catalyses the reaction K(+)(out) + ATP + H2O = K(+)(in) + ADP + phosphate + H(+). Its function is as follows. Part of the high-affinity ATP-driven potassium transport (or Kdp) system, which catalyzes the hydrolysis of ATP coupled with the electrogenic transport of potassium into the cytoplasm. This subunit is responsible for energy coupling to the transport system and for the release of the potassium ions to the cytoplasm. In Escherichia coli (strain SMS-3-5 / SECEC), this protein is Potassium-transporting ATPase ATP-binding subunit.